A 515-amino-acid polypeptide reads, in one-letter code: Gamma aminobutyrate transaminase 1, mitochondrial (515 aa).

The N-terminal 57 residues, methionine 1–serine 57, are a transit peptide targeting the mitochondrion. Glycine 172–serine 173 is a binding site for pyridoxal 5'-phosphate. Residue tyrosine 205 coordinates substrate. Residue aspartate 312 coordinates pyridoxal 5'-phosphate. Lysine 341 provides a ligand contact to substrate. Position 341 is an N6-(pyridoxal phosphate)lysine (lysine 341).

It belongs to the class-III pyridoxal-phosphate-dependent aminotransferase family. In terms of tissue distribution, expressed in leaves, roots, stems, flowers and fruits.

It localises to the mitochondrion. It catalyses the reaction 4-aminobutanoate + pyruvate = succinate semialdehyde + L-alanine. It carries out the reaction 4-aminobutanoate + glyoxylate = succinate semialdehyde + glycine. In terms of biological role, transaminase that degrades gamma-amino butyric acid (GABA) and uses pyruvate or glyoxylate as amino-group acceptor. Cannot use beta-alanine, ornithine, acetylornithine, serine, glycine, asparagine, glutamine, glutamate, valine, leucine, isoleucine, methionine, phenylalanine, histidine, lysine, arginine, aspartate, threonine, tyrosine, tryptophan, proline, or cysteine as amino donors. Acts predominantly in vegetative tissues. The chain is Gamma aminobutyrate transaminase 1, mitochondrial (GABA-TP1) from Solanum lycopersicum (Tomato).